We begin with the raw amino-acid sequence, 183 residues long: Acireductone dioxygenase (183 aa).

Fe(2+)-binding residues include His99, His101, Glu105, and His144. Ni(2+) contacts are provided by His99, His101, Glu105, and His144.

It belongs to the acireductone dioxygenase (ARD) family. As to quaternary structure, monomer. The cofactor is Fe(2+). Requires Ni(2+) as cofactor.

It carries out the reaction 1,2-dihydroxy-5-(methylsulfanyl)pent-1-en-3-one + O2 = 3-(methylsulfanyl)propanoate + CO + formate + 2 H(+). The enzyme catalyses 1,2-dihydroxy-5-(methylsulfanyl)pent-1-en-3-one + O2 = 4-methylsulfanyl-2-oxobutanoate + formate + 2 H(+). It functions in the pathway amino-acid biosynthesis; L-methionine biosynthesis via salvage pathway; L-methionine from S-methyl-5-thio-alpha-D-ribose 1-phosphate: step 5/6. In terms of biological role, catalyzes 2 different reactions between oxygen and the acireductone 1,2-dihydroxy-3-keto-5-methylthiopentene (DHK-MTPene) depending upon the metal bound in the active site. Fe-containing acireductone dioxygenase (Fe-ARD) produces formate and 2-keto-4-methylthiobutyrate (KMTB), the alpha-ketoacid precursor of methionine in the methionine recycle pathway. Ni-containing acireductone dioxygenase (Ni-ARD) produces methylthiopropionate, carbon monoxide and formate, and does not lie on the methionine recycle pathway. This chain is Acireductone dioxygenase, found in Microcystis aeruginosa (strain NIES-843 / IAM M-2473).